The chain runs to 615 residues: Cilia- and flagella-associated protein 52 (615 aa).

WD repeat units lie at residues 54-98 (GHSD…LIHR), 101-142 (LHKV…AICG), 145-184 (CNTN…NKLR), 232-275 (GPAK…AGTK), 320-359 (AHND…ELLR), 362-401 (VPNL…IIFT), 405-444 (AHQK…QTLE), 449-488 (DHKG…RRTS), 490-529 (FANT…AIRI), 533-572 (SDLD…CYFV), and 575-614 (AHSG…TLAD).

The protein belongs to the CFAP52 family.

The protein resides in the cytoplasm. It is found in the cell projection. Its subcellular location is the cilium. The protein localises to the flagellum. May play a role in cell growth and/or survival. This chain is Cilia- and flagella-associated protein 52, found in Chlamydomonas reinhardtii (Chlamydomonas smithii).